The chain runs to 695 residues: Threonine--tRNA ligase (695 aa).

One can recognise a TGS domain in the interval 1-66 (MSAPARPAPA…DTDVEVTPVA (66 aa)). The catalytic stretch occupies residues 263-569 (DHRKLGVELD…LTEHYAGAFP (307 aa)). Positions 368, 419, and 546 each coordinate Zn(2+).

The protein belongs to the class-II aminoacyl-tRNA synthetase family. In terms of assembly, homodimer. Requires Zn(2+) as cofactor.

It is found in the cytoplasm. The catalysed reaction is tRNA(Thr) + L-threonine + ATP = L-threonyl-tRNA(Thr) + AMP + diphosphate + H(+). Catalyzes the attachment of threonine to tRNA(Thr) in a two-step reaction: L-threonine is first activated by ATP to form Thr-AMP and then transferred to the acceptor end of tRNA(Thr). Also edits incorrectly charged L-seryl-tRNA(Thr). This is Threonine--tRNA ligase from Mycolicibacterium gilvum (strain PYR-GCK) (Mycobacterium gilvum (strain PYR-GCK)).